The chain runs to 178 residues: Alkyl hydroperoxide reductase AhpD (178 aa).

Cys-130 serves as the catalytic Proton donor. Cys-130 and Cys-133 form a disulfide bridge. Cys-133 acts as the Cysteine sulfenic acid (-SOH) intermediate in catalysis.

This sequence belongs to the AhpD family. In terms of assembly, homotrimer.

It catalyses the reaction N(6)-[(R)-dihydrolipoyl]-L-lysyl-[lipoyl-carrier protein] + a hydroperoxide = N(6)-[(R)-lipoyl]-L-lysyl-[lipoyl-carrier protein] + an alcohol + H2O. Antioxidant protein with alkyl hydroperoxidase activity. Required for the reduction of the AhpC active site cysteine residues and for the regeneration of the AhpC enzyme activity. This chain is Alkyl hydroperoxide reductase AhpD, found in Mycolicibacterium paratuberculosis (strain ATCC BAA-968 / K-10) (Mycobacterium paratuberculosis).